The chain runs to 688 residues: Protein sel-1 homolog 2 (688 aa).

The signal sequence occupies residues 1 to 23 (MKPLSLLIEILIILGVTIKTIKA). At 24 to 662 (EEHNKRQKER…RWNWLKLDNT (639 aa)) the chain is on the extracellular side. Residue Asn34 is glycosylated (N-linked (GlcNAc...) asparagine). Sel1-like repeat units lie at residues 107 to 142 (GDQL…DMGN), 143 to 178 (LKAM…KEGS), 179 to 214 (CKAQ…AGGN), 215 to 250 (MMSQ…DYIA), 297 to 333 (VQIQ…KAGS), 334 to 370 (ANAM…SKGN), 371 to 406 (AIGL…EKGW), 407 to 442 (PDAQ…QSGQ), 443 to 478 (PLAI…ELGH), 551 to 586 (AFAR…NKYH), and 588 to 623 (AQAM…QTSP). The helical transmembrane segment at 663-683 (IGPHWDLFVIGLIVPGLILLL) threads the bilayer. Over 684–688 (RNHHG) the chain is Cytoplasmic.

This sequence belongs to the sel-1 family.

The protein resides in the membrane. It localises to the cell projection. Its subcellular location is the cilium. The protein localises to the nucleus speckle. The protein is Protein sel-1 homolog 2 (SEL1L2) of Homo sapiens (Human).